The sequence spans 154 residues: SsrA-binding protein (154 aa).

The interval 131–154 (DKRQDLKQKEAKRDIERAFKERQQ) is disordered. Positions 132–154 (KRQDLKQKEAKRDIERAFKERQQ) are enriched in basic and acidic residues.

It belongs to the SmpB family.

It is found in the cytoplasm. Functionally, required for rescue of stalled ribosomes mediated by trans-translation. Binds to transfer-messenger RNA (tmRNA), required for stable association of tmRNA with ribosomes. tmRNA and SmpB together mimic tRNA shape, replacing the anticodon stem-loop with SmpB. tmRNA is encoded by the ssrA gene; the 2 termini fold to resemble tRNA(Ala) and it encodes a 'tag peptide', a short internal open reading frame. During trans-translation Ala-aminoacylated tmRNA acts like a tRNA, entering the A-site of stalled ribosomes, displacing the stalled mRNA. The ribosome then switches to translate the ORF on the tmRNA; the nascent peptide is terminated with the 'tag peptide' encoded by the tmRNA and targeted for degradation. The ribosome is freed to recommence translation, which seems to be the essential function of trans-translation. In Listeria innocua serovar 6a (strain ATCC BAA-680 / CLIP 11262), this protein is SsrA-binding protein.